The chain runs to 565 residues: Ubiquitin carboxyl-terminal hydrolase 21 (565 aa).

2 stretches are compositionally biased toward basic and acidic residues: residues 1–14 (MPQA…RTRE) and 58–70 (PPDE…DLGR). The tract at residues 1–128 (MPQASEHRLG…LRPMGIALGG (128 aa)) is disordered. The segment covering 71–81 (GRTSGSRPRGP) has biased composition (low complexity). The span at 104–116 (SRTNLTRSKSVSS) shows a compositional bias: polar residues. The short motif at 134-152 (ELGAALSRLALRPEPPTLR) is the Nuclear export signal element. Residues 212-558 (VGLRNLGNTC…EGYVLFYQLM (347 aa)) enclose the USP domain. The active-site Nucleophile is Cys221. Positions 324 to 347 (APPILASGPVPSPPRRGGALHEEP) are disordered. The Zn(2+) site is built by Cys384, Cys387, Cys437, and Cys440. Catalysis depends on His518, which acts as the Proton acceptor.

The protein belongs to the peptidase C19 family. USP21 subfamily. As to quaternary structure, interacts with BEND3.

It is found in the cytoplasm. The protein localises to the nucleus. The catalysed reaction is Thiol-dependent hydrolysis of ester, thioester, amide, peptide and isopeptide bonds formed by the C-terminal Gly of ubiquitin (a 76-residue protein attached to proteins as an intracellular targeting signal).. Its function is as follows. Deubiquitinates histone H2A, a specific tag for epigenetic transcriptional repression, thereby acting as a coactivator. Deubiquitination of histone H2A releaves the repression of di- and trimethylation of histone H3 at 'Lys-4', resulting in regulation of transcriptional initiation. Regulates gene expression via histone H2A deubiquitination. Deubiquitinates BAZ2A/TIP5 leading to its stabilization. Also capable of removing NEDD8 from NEDD8 conjugates but has no effect on Sentrin-1 conjugates. Also acts as a negative regulator of the ribosome quality control (RQC) by mediating deubiquitination of 40S ribosomal proteins RPS10/eS10 and RPS20/uS10, thereby antagonizing ZNF598-mediated 40S ubiquitination. The chain is Ubiquitin carboxyl-terminal hydrolase 21 (Usp21) from Rattus norvegicus (Rat).